We begin with the raw amino-acid sequence, 459 residues long: UDP-N-acetylmuramoylalanine--D-glutamate ligase (459 aa).

119–125 (GTNGKTT) is a binding site for ATP.

Belongs to the MurCDEF family.

The protein resides in the cytoplasm. The enzyme catalyses UDP-N-acetyl-alpha-D-muramoyl-L-alanine + D-glutamate + ATP = UDP-N-acetyl-alpha-D-muramoyl-L-alanyl-D-glutamate + ADP + phosphate + H(+). It functions in the pathway cell wall biogenesis; peptidoglycan biosynthesis. Functionally, cell wall formation. Catalyzes the addition of glutamate to the nucleotide precursor UDP-N-acetylmuramoyl-L-alanine (UMA). The chain is UDP-N-acetylmuramoylalanine--D-glutamate ligase from Lacticaseibacillus paracasei (strain ATCC 334 / BCRC 17002 / CCUG 31169 / CIP 107868 / KCTC 3260 / NRRL B-441) (Lactobacillus paracasei).